We begin with the raw amino-acid sequence, 102 residues long: Large ribosomal subunit protein bL21 (102 aa).

This sequence belongs to the bacterial ribosomal protein bL21 family. In terms of assembly, part of the 50S ribosomal subunit. Contacts protein L20.

Functionally, this protein binds to 23S rRNA in the presence of protein L20. In Levilactobacillus brevis (strain ATCC 367 / BCRC 12310 / CIP 105137 / JCM 1170 / LMG 11437 / NCIMB 947 / NCTC 947) (Lactobacillus brevis), this protein is Large ribosomal subunit protein bL21.